The sequence spans 231 residues: MYSSNSEIKKKVTFILAAAGQGKRMNLNSPKQFLDYRGEPLFYSSLKLAFENKNINDIIIITNKENLNFMVKYCQNKNLFSKVKYIVEGGSERQYSIYNAIKKIKDTDIVIIQDAARPFLKDKYIEESLKILNDDCDGAIIGVKCKDTIKIIDENGIVLETPNRDNLIMVHTPQTFKFEILKKAHQMAEEKNILATDDASLVEMISGKIKIIYGDYDNIKITVQEDLKFLK.

Belongs to the IspD/TarI cytidylyltransferase family. IspD subfamily.

It catalyses the reaction 2-C-methyl-D-erythritol 4-phosphate + CTP + H(+) = 4-CDP-2-C-methyl-D-erythritol + diphosphate. Its pathway is isoprenoid biosynthesis; isopentenyl diphosphate biosynthesis via DXP pathway; isopentenyl diphosphate from 1-deoxy-D-xylulose 5-phosphate: step 2/6. Functionally, catalyzes the formation of 4-diphosphocytidyl-2-C-methyl-D-erythritol from CTP and 2-C-methyl-D-erythritol 4-phosphate (MEP). The chain is 2-C-methyl-D-erythritol 4-phosphate cytidylyltransferase from Fusobacterium nucleatum subsp. nucleatum (strain ATCC 25586 / DSM 15643 / BCRC 10681 / CIP 101130 / JCM 8532 / KCTC 2640 / LMG 13131 / VPI 4355).